We begin with the raw amino-acid sequence, 412 residues long: MSKSARNRTRRNPDGQQGSARSFDFAEYLRTETVGGMVLLAAAALALVLANSPAEELYRTVRDFTVGPHFLHLDLTIGEWAKDGLLAIFFFVAGLELKRELVVGELADRKTATLPVVAALGGMVVPAVLAFAIGHGAPGAHAAWAIPVATDIAFALGVLSLTGSWMPTAARVFLLSLAVVDDLGAIVVIAVLFTSGLSVLALLAAAALCAVYWYAQKRRITTPFLYVPLAVATWIAVHSSGIHATIAGVALGLLTRVRRDLHETASPAMRLEHRLQPWSAGLIVPVFALFAAGVPVDGEALVAMTHDRVAIAVVVGLVVGKLVGIFGSSYLAVKIGIGAKPRGLRWRDLSALAMLGGVGFTVSLLIAELSLEGAAAERAKAAVLIASALASLLAAVMLLRRGRKVRNGDASA.

The next 10 helical transmembrane spans lie at 34 to 54 (VGGM…NSPA), 75 to 95 (LTIG…VAGL), 114 to 134 (LPVV…FAIG), 142 to 162 (AAWA…LSLT), 183 to 203 (LGAI…LALL), 234 to 254 (WIAV…LGLL), 282 to 302 (LIVP…EALV), 309 to 329 (VAIA…FGSS), 349 to 369 (LSAL…IAEL), and 379 to 399 (AKAA…VMLL).

It belongs to the NhaA Na(+)/H(+) (TC 2.A.33) antiporter family.

The protein localises to the cell membrane. The catalysed reaction is Na(+)(in) + 2 H(+)(out) = Na(+)(out) + 2 H(+)(in). Functionally, na(+)/H(+) antiporter that extrudes sodium in exchange for external protons. The polypeptide is Na(+)/H(+) antiporter NhaA 1 (Saccharopolyspora erythraea (strain ATCC 11635 / DSM 40517 / JCM 4748 / NBRC 13426 / NCIMB 8594 / NRRL 2338)).